Consider the following 275-residue polypeptide: Ammonia transport outward protein 3 (275 aa).

Residues 1 to 84 are Extracellular-facing; the sequence is MTSSASSPQD…NCAKYTPHQF (84 aa). A Phosphoserine modification is found at S4. The chain crosses the membrane as a helical span at residues 85–105; it reads ANPVPLGLASFSLSCLVLSLI. At 106-120 the chain is on the cytoplasmic side; sequence NANVRGVTDGKWALS. Residues 121-141 traverse the membrane as a helical segment; it reads LFMFFGGAIELFAGLLCFVIG. At 142–181 the chain is on the extracellular side; it reads DTYAMTVFSSFGGFWICYGYGLTDTDNLVSGYTDPTMLNN. A helical membrane pass occupies residues 182-202; the sequence is VIGFFLAGWTVFTFLMLMCTL. Over 203–207 the chain is Cytoplasmic; the sequence is KSTWG. Residues 208–228 traverse the membrane as a helical segment; that stretch reads LFLLLTFLDLTFLLLCIGTFI. Over 229–236 the chain is Extracellular; sequence DNNNLKMA. Residues 237–257 traverse the membrane as a helical segment; it reads GGYFGILSSCCGWYSLYCSVV. Residues 258 to 275 are Cytoplasmic-facing; the sequence is SPSNSYLAFRAHTMPNAP.

Belongs to the acetate uptake transporter (AceTr) (TC 2.A.96) family.

It is found in the cell membrane. Transporter protein required for ammonia export. Induced in rho(0) cells, probably to eliminate the excess ammonia that arises because of a potential defect in ammonia assimilation in those cells. This is Ammonia transport outward protein 3 (ATO3) from Saccharomyces cerevisiae (strain ATCC 204508 / S288c) (Baker's yeast).